The following is a 529-amino-acid chain: Zinc finger protein 572 (529 aa).

Positions 1–125 (MEQEQKLLVS…TGPAGQQNPS (125 aa)) are disordered. Residue lysine 6 forms a Glycyl lysine isopeptide (Lys-Gly) (interchain with G-Cter in SUMO2) linkage. The span at 22 to 42 (KNTITGDESKNNLKTVQFSNS) shows a compositional bias: polar residues. Residues 43–68 (KADKERASKWSRSDGPENYKDEDTKE) show a composition bias toward basic and acidic residues. Positions 87–96 (NDSNLGSQRN) are enriched in polar residues. 12 C2H2-type zinc fingers span residues 131-153 (YKCSECWKSFSNSSHLRIHQRTH), 159-181 (YRCSECGKCFSNSSHLIQHLRTH), 187-209 (YQCGECGKSFSNTSHLIIHERTH), 215-237 (YKCPECAKSLSSSSHLIQHHRSH), 243-265 (YECPLCGKCFSHSYVLVEHQRTH), 271-293 (YKCPDCGKSFSQSSSLIRHQRTH), 299-321 (YKCPECGKGFGCNSTLIKHQRIH), 327-349 (YQCIECGKNFSRSSNLVTHQKMH), 383-405 (YKCCECGKSFGLSSHLIRHQRTH), 411-433 (YRCSECWKTFSQSSTLVIHQRTH), 439-461 (YKCPDCGECFSQSFNLIRHRRTH), and 467-489 (YKCTDCEKCFSRSAYLSQHRKIH).

Belongs to the krueppel C2H2-type zinc-finger protein family.

The protein localises to the nucleus. Its function is as follows. May be involved in transcriptional regulation. This Bos taurus (Bovine) protein is Zinc finger protein 572 (ZNF572).